We begin with the raw amino-acid sequence, 455 residues long: Chromosomal replication initiator protein DnaA (455 aa).

The interval Met1 to Met75 is domain I, interacts with DnaA modulators. Positions Met75 to Met106 are domain II. Positions Ser107–Ala321 are domain III, AAA+ region. 4 residues coordinate ATP: Gly151, Gly153, Lys154, and Thr155. Residues Asn322 to Glu455 form a domain IV, binds dsDNA region.

The protein belongs to the DnaA family. In terms of assembly, oligomerizes as a right-handed, spiral filament on DNA at oriC.

The protein resides in the cytoplasm. Its function is as follows. Plays an essential role in the initiation and regulation of chromosomal replication. ATP-DnaA binds to the origin of replication (oriC) to initiate formation of the DNA replication initiation complex once per cell cycle. Binds the DnaA box (a 9 base pair repeat at the origin) and separates the double-stranded (ds)DNA. Forms a right-handed helical filament on oriC DNA; dsDNA binds to the exterior of the filament while single-stranded (ss)DNA is stabiized in the filament's interior. The ATP-DnaA-oriC complex binds and stabilizes one strand of the AT-rich DNA unwinding element (DUE), permitting loading of DNA polymerase. After initiation quickly degrades to an ADP-DnaA complex that is not apt for DNA replication. Binds acidic phospholipids. In Helicobacter pylori (strain HPAG1), this protein is Chromosomal replication initiator protein DnaA.